A 718-amino-acid chain; its full sequence is Calpastatin (718 aa).

2 disordered regions span residues 1–189 (MNPA…MSST) and 210–238 (EKKTGVAGPPPDSVTPLGPDDAIDALSSD). Positions 20–29 (PHSKKRHRRQ) are enriched in basic residues. Composition is skewed to basic and acidic residues over residues 30-61 (DAKTEPEKSQSTKPPVDHEKKAQEGKPKEHTK) and 68-104 (HASDGEGKHGRNEKTASRSKEPVTPAKRTEPETKPQD). Lys-32 participates in a covalent cross-link: Glycyl lysine isopeptide (Lys-Gly) (interchain with G-Cter in SUMO2). Lys-49 is subject to N6-acetyllysine. At Ser-86 the chain carries Phosphoserine. The span at 114–124 (AAGTTAAPGKA) shows a compositional bias: low complexity. A phosphoserine mark is found at Ser-133, Ser-222, and Ser-243. Residues 170 to 222 (TQEDSTAYTGPEISDPMSSTYIEELGKREVTIPPKYRELLEKKTGVAGPPPDS) form an Inhibitory domain 1 repeat. 2 disordered regions span residues 266 to 291 (ESAKVMRAAAPPQEKKRKVEEDAMSD) and 320 to 509 (EAKR…QLPA). Ser-290 carries the post-translational modification Blocked amino end (Ser); in form erythrocyte. One copy of the Inhibitory domain 2 repeat lies at 307–359 (EPELDLSSIKEVAEAKRKEEKVEKCGEDDETVPAEYRLKPATDKDGKPLLPEP). Composition is skewed to basic and acidic residues over residues 320–331 (EAKRKEEKVEKC), 342–377 (YRLKPATDKDGKPLLPEPAEKPKPRSESELIDELSK), and 384–399 (SNEKQPKPTGKTEESK). Ser-367, Ser-369, and Ser-376 each carry phosphoserine. Low complexity predominate over residues 400-411 (AAVPAPVAEAVP). At Ser-444 the chain carries Phosphoserine. A compositionally biased stretch (basic and acidic residues) spans 446 to 496 (GRKEADPEEGKPVADKIKEKSKEEEREKLGEKEETIPPDYRLEEAKDKDGK). An Inhibitory domain 3 repeat occupies 450–503 (ADPEEGKPVADKIKEKSKEEEREKLGEKEETIPPDYRLEEAKDKDGKPLLPSEP). Phosphoserine occurs at positions 520, 531, 579, and 581. Residues 543–718 (VSEVVSQSPA…KPKANEKNAS (176 aa)) form a disordered region. Residues 566–579 (PSNKELDDALDKLS) are compositionally biased toward basic and acidic residues. Residues 587–640 (PDPDENKPMEDKVKERAKKEHKDKLGERDDTIPPEYRHLLDQGEQDKPEKPPTK) form an Inhibitory domain 4 repeat. 2 stretches are compositionally biased toward basic and acidic residues: residues 587–650 (PDPD…KPAG) and 706–718 (ETSKPKANEKNAS).

This sequence belongs to the protease inhibitor I27 (calpastatin) family.

Specific inhibition of calpain (calcium-dependent cysteine protease). Plays a key role in postmortem tenderization of meat and have been proposed to be involved in muscle protein degradation in living tissue. The polypeptide is Calpastatin (CAST) (Oryctolagus cuniculus (Rabbit)).